The following is a 537-amino-acid chain: Pentatricopeptide repeat-containing protein At4g32450, mitochondrial (537 aa).

The transit peptide at methionine 1–asparagine 110 directs the protein to the mitochondrion. Polar residues predominate over residues tryptophan 113–phenylalanine 140. The segment at tryptophan 113–serine 148 is disordered. PPR repeat units lie at residues serine 145–valine 179, aspartate 180–serine 210, aspartate 215–threonine 249, tryptophan 250–proline 280, aspartate 281–proline 316, and cysteine 317–asparagine 347. Positions tyrosine 412–isoleucine 442 are type E(+) motif. The interval glutamate 443–tryptophan 537 is type DYW motif.

It belongs to the PPR family. PCMP-H subfamily.

Its subcellular location is the mitochondrion. This is Pentatricopeptide repeat-containing protein At4g32450, mitochondrial (PCMP-H63) from Arabidopsis thaliana (Mouse-ear cress).